The sequence spans 639 residues: Chaperone protein DnaK (639 aa).

Thr-198 is subject to Phosphothreonine; by autocatalysis. The segment at 604-639 (KSQAQGGDNADAGKQANAAADDVVDAEFEEVKDDKK) is disordered. Residues 606–624 (QAQGGDNADAGKQANAAAD) show a composition bias toward low complexity. A compositionally biased stretch (acidic residues) spans 625–639 (DVVDAEFEEVKDDKK).

The protein belongs to the heat shock protein 70 family.

In terms of biological role, acts as a chaperone. In Shewanella baltica (strain OS223), this protein is Chaperone protein DnaK.